Consider the following 435-residue polypeptide: Solute carrier family 38 member 8 (435 aa).

Transmembrane regions (helical) follow at residues 29-49 (AVFI…PWAF), 55-75 (VVPA…GLVI), 100-120 (IGKL…VAFL), 151-171 (FTLP…REIA), 178-198 (ILGT…YYLW), 218-240 (VFSV…SIYC), 250-270 (WALV…LTGV), 295-315 (IIVA…IVLF), 348-368 (MPLT…MPDL), 374-394 (IIGG…LICA), and 410-430 (VWGV…TAAA).

The protein belongs to the amino acid/polyamine transporter 2 family. In terms of tissue distribution, expressed in fetal and adult brain, and spinal cord. In the brain, it is localized in the cell body and axon of the majority of neuronal cells and in a subset of glial cells. Found throughout the neuronal retina, with higher expression levels in the inner and outer plexiform layers and the photoreceptor layer. Very weak expression is also present in the kidneys, thymus, and testes.

Its subcellular location is the membrane. It is found in the cytoplasm. The protein localises to the cell cortex. The protein resides in the cell projection. It localises to the axon. It catalyses the reaction L-glutamine(out) = L-glutamine(in). It carries out the reaction L-alanine(in) = L-alanine(out). The enzyme catalyses L-histidine(out) = L-histidine(in). The catalysed reaction is L-aspartate(out) = L-aspartate(in). It catalyses the reaction L-arginine(in) = L-arginine(out). It carries out the reaction L-leucine(in) = L-leucine(out). In terms of biological role, electrogenic sodium-dependent amino acid transporter with a preference for L-glutamine, L-alanine, L-histidine, L-aspartate and L-arginine. May facilitate glutamine uptake in both excitatory and inhibitory neurons. The transport mechanism and stoichiometry remain to be elucidated. The protein is Solute carrier family 38 member 8 of Homo sapiens (Human).